A 287-amino-acid polypeptide reads, in one-letter code: Inositol diphosphatase siw14 (287 aa).

The 172-residue stretch at N85–D256 folds into the Tyrosine-protein phosphatase domain. Phosphoserine is present on residues S156 and S159. Residue C189 is the Phosphocysteine intermediate of the active site.

The protein belongs to the protein-tyrosine phosphatase family. Atypical dual-specificity phosphatase Siw14-like subfamily.

The protein localises to the cytoplasm. It is found in the nucleus. It catalyses the reaction 5-diphospho-1D-myo-inositol 1,2,3,4,6-pentakisphosphate + H2O = 1D-myo-inositol hexakisphosphate + phosphate + H(+). The catalysed reaction is 1-diphospho-1D-myo-inositol 2,3,4,5,6-pentakisphosphate + H2O = 1D-myo-inositol hexakisphosphate + phosphate + H(+). It carries out the reaction 1,5-bis(diphospho)-1D-myo-inositol 2,3,4,6-tetrakisphosphate + H2O = 1-diphospho-1D-myo-inositol 2,3,4,5,6-pentakisphosphate + phosphate + 2 H(+). With respect to regulation, activity is inhibited by the reaction product inorganic phosphate and by sulfate (a phosphate mimetic). Not inhibited by magnesium. Functionally, cleaves the beta-phosphate at the 1- and 5-position of soluble inositol pyrophosphates. Has exopolyphosphatase activity in vitro but does not appear to contribute to the homeostasis of cellular polyphosphate. This Schizosaccharomyces pombe (strain 972 / ATCC 24843) (Fission yeast) protein is Inositol diphosphatase siw14.